Consider the following 224-residue polypeptide: Oocyte zinc finger protein XlCOF6.1 (224 aa).

8 C2H2-type zinc fingers span residues 6–28 (FSCS…CRSH), 34–56 (FHCT…QRYH), 62–84 (FTCF…IRMH), 90–112 (FSCS…QKIH), 118–140 (FSCS…YRTH), 146–168 (FPCP…RRTH), 174–196 (FACS…RLGH), and 202–224 (FSCS…LKSH).

It belongs to the krueppel C2H2-type zinc-finger protein family.

The protein localises to the nucleus. Functionally, may be involved in transcriptional regulation. The chain is Oocyte zinc finger protein XlCOF6.1 from Xenopus laevis (African clawed frog).